The sequence spans 359 residues: Peptide methionine sulfoxide reductase MsrA/MsrB (359 aa).

The peptide methionine sulfoxide reductase A stretch occupies residues 36–189; the sequence is RVIYLAGGCF…PGGYCHIDLK (154 aa). The active site involves C44. In terms of domain architecture, MsrB spans 206 to 329; sequence DEVLKKKLTK…NSAALRFIPL (124 aa). Catalysis depends on C318, which acts as the Nucleophile.

It in the N-terminal section; belongs to the MsrA Met sulfoxide reductase family. The protein in the C-terminal section; belongs to the MsrB Met sulfoxide reductase family.

It carries out the reaction L-methionyl-[protein] + [thioredoxin]-disulfide + H2O = L-methionyl-(S)-S-oxide-[protein] + [thioredoxin]-dithiol. The enzyme catalyses [thioredoxin]-disulfide + L-methionine + H2O = L-methionine (S)-S-oxide + [thioredoxin]-dithiol. The catalysed reaction is L-methionyl-[protein] + [thioredoxin]-disulfide + H2O = L-methionyl-(R)-S-oxide-[protein] + [thioredoxin]-dithiol. Its function is as follows. Has an important function as a repair enzyme for proteins that have been inactivated by oxidation. Catalyzes the reversible oxidation-reduction of methionine sulfoxide in proteins to methionine. The chain is Peptide methionine sulfoxide reductase MsrA/MsrB (msrAB) from Helicobacter pylori (strain J99 / ATCC 700824) (Campylobacter pylori J99).